Here is a 192-residue protein sequence, read N- to C-terminus: Fe/S biogenesis protein NfuA (192 aa).

Positions 150 and 153 each coordinate [4Fe-4S] cluster.

The protein belongs to the NfuA family. As to quaternary structure, homodimer. The cofactor is [4Fe-4S] cluster.

Its function is as follows. Involved in iron-sulfur cluster biogenesis. Binds a 4Fe-4S cluster, can transfer this cluster to apoproteins, and thereby intervenes in the maturation of Fe/S proteins. Could also act as a scaffold/chaperone for damaged Fe/S proteins. The polypeptide is Fe/S biogenesis protein NfuA (Buchnera aphidicola subsp. Acyrthosiphon pisum (strain APS) (Acyrthosiphon pisum symbiotic bacterium)).